A 370-amino-acid chain; its full sequence is tRNA/tmRNA (uracil-C(5))-methyltransferase (370 aa).

S-adenosyl-L-methionine contacts are provided by Q190, Y218, N223, E239, and D299. Residue C324 is the Nucleophile of the active site. E358 (proton acceptor) is an active-site residue.

The protein belongs to the class I-like SAM-binding methyltransferase superfamily. RNA M5U methyltransferase family. TrmA subfamily.

The enzyme catalyses uridine(54) in tRNA + S-adenosyl-L-methionine = 5-methyluridine(54) in tRNA + S-adenosyl-L-homocysteine + H(+). It catalyses the reaction uridine(341) in tmRNA + S-adenosyl-L-methionine = 5-methyluridine(341) in tmRNA + S-adenosyl-L-homocysteine + H(+). Its function is as follows. Dual-specificity methyltransferase that catalyzes the formation of 5-methyluridine at position 54 (m5U54) in all tRNAs, and that of position 341 (m5U341) in tmRNA (transfer-mRNA). This is tRNA/tmRNA (uracil-C(5))-methyltransferase from Sodalis glossinidius (strain morsitans).